Consider the following 91-residue polypeptide: Large ribosomal subunit protein uL23c (91 aa).

This sequence belongs to the universal ribosomal protein uL23 family. As to quaternary structure, part of the 50S ribosomal subunit.

The protein localises to the plastid. It localises to the chloroplast. Functionally, binds to 23S rRNA. The polypeptide is Large ribosomal subunit protein uL23c (rpl23) (Chaetosphaeridium globosum (Charophycean green alga)).